The primary structure comprises 141 residues: Large ribosomal subunit protein uL13 (141 aa).

It belongs to the universal ribosomal protein uL13 family. Part of the 50S ribosomal subunit.

Its function is as follows. This protein is one of the early assembly proteins of the 50S ribosomal subunit, although it is not seen to bind rRNA by itself. It is important during the early stages of 50S assembly. The polypeptide is Large ribosomal subunit protein uL13 (Helicobacter acinonychis (strain Sheeba)).